A 358-amino-acid polypeptide reads, in one-letter code: Psilocybin cluster transcription regulator (358 aa).

Disordered regions lie at residues 1–40 (MAPA…IAGM) and 62–212 (SGGK…RRRR). Pro residues predominate over residues 18-29 (PPAPGAPAPANA). A compositionally biased stretch (polar residues) spans 79–91 (QTLSNLAQAQPYG). A compositionally biased stretch (low complexity) spans 179–190 (PTTGRRGGRSAT). The span at 195 to 209 (EWSRQRKDNHKEVER) shows a compositional bias: basic and acidic residues. Residues 199-212 (QRKDNHKEVERRRR) form a basic motif region. The bHLH domain maps to 199–249 (QRKDNHKEVERRRRGNINEGINELGRIVPSGSGEKAKGAILSRAVQYIHHL). Positions 213-249 (GNINEGINELGRIVPSGSGEKAKGAILSRAVQYIHHL) are helix-loop-helix motif. The stretch at 264-306 (KLLMDQAMGDLQAQLEEVKRLWEEERMARTRLEAELEVLRNMN) forms a coiled coil. The tract at residues 308-358 (VNAGSAPASKDESAAGTKRRSTDGAEAATAATESSTANAEGERDGKRQRTE) is disordered. A compositionally biased stretch (low complexity) spans 331-346 (GAEAATAATESSTANA). The span at 347-358 (EGERDGKRQRTE) shows a compositional bias: basic and acidic residues.

The protein resides in the nucleus. Its function is as follows. Transcription factor that may regulate the expression of the gene cluster that mediates the biosynthesis of psilocybin, a psychotropic tryptamine-derived natural product. The polypeptide is Psilocybin cluster transcription regulator (Psilocybe cubensis (Psychedelic mushroom)).